A 281-amino-acid chain; its full sequence is Very long chain fatty acid elongase 7 (281 aa).

Residue A2 is modified to N-acetylalanine. The Lumenal segment spans residues A2–D27. The helical transmembrane segment at Y28–V48 threads the bilayer. At T49–N72 the chain is on the cytoplasmic side. A helical transmembrane segment spans residues F73 to T93. Residues G94–H115 lie on the Lumenal side of the membrane. Cysteines 99 and 231 form a disulfide. Residues T116–L136 traverse the membrane as a helical segment. 3-oxoeicosanoyl-CoA contacts are provided by K124, R137, K139, Q142, and H147. The Cytoplasmic segment spans residues R137–Q142. Residues V143–V162 traverse the membrane as a helical segment. A HxxHH motif motif is present at residues H147–H151. The active-site Nucleophile is H150. The Lumenal segment spans residues K163–T171. Residues F172–G194 traverse the membrane as a helical segment. Y187, K204, T208, and Q211 together coordinate 3-oxoeicosanoyl-CoA. The Cytoplasmic portion of the chain corresponds to P195–H206. The chain crosses the membrane as a helical span at residues L207 to F227. The Lumenal segment spans residues M228–P236. A helical transmembrane segment spans residues V237 to W257. Residues Y258 to H281 are Cytoplasmic-facing. R266 contributes to the 3-oxoeicosanoyl-CoA binding site. Positions K277 to H281 match the Di-lysine motif motif.

Belongs to the ELO family. ELOVL7 subfamily. As to quaternary structure, homodimer. Interacts with TECR.

The protein resides in the endoplasmic reticulum membrane. It carries out the reaction a very-long-chain acyl-CoA + malonyl-CoA + H(+) = a very-long-chain 3-oxoacyl-CoA + CO2 + CoA. The enzyme catalyses eicosanoyl-CoA + malonyl-CoA + H(+) = 3-oxodocosanoyl-CoA + CO2 + CoA. It catalyses the reaction (5Z,8Z,11Z,14Z)-eicosatetraenoyl-CoA + malonyl-CoA + H(+) = (7Z,10Z,13Z,16Z)-3-oxodocosatetraenoyl-CoA + CO2 + CoA. The catalysed reaction is (6Z,9Z,12Z)-octadecatrienoyl-CoA + malonyl-CoA + H(+) = (8Z,11Z,14Z)-3-oxoeicosatrienoyl-CoA + CO2 + CoA. It carries out the reaction (9Z,12Z)-octadecadienoyl-CoA + malonyl-CoA + H(+) = (11Z,14Z)-3-oxoicosa-11,14-dienoyl-CoA + CO2 + CoA. The enzyme catalyses (9Z)-octadecenoyl-CoA + malonyl-CoA + H(+) = 3-oxo-(11Z)-eicosenoyl-CoA + CO2 + CoA. It catalyses the reaction octadecanoyl-CoA + malonyl-CoA + H(+) = 3-oxoeicosanoyl-CoA + CO2 + CoA. The catalysed reaction is hexadecanoyl-CoA + malonyl-CoA + H(+) = 3-oxooctadecanoyl-CoA + CO2 + CoA. It carries out the reaction (9Z,12Z,15Z)-octadecatrienoyl-CoA + malonyl-CoA + H(+) = (11Z,14Z,17Z)-3-oxoeicosatrienoyl-CoA + CO2 + CoA. The protein operates within lipid metabolism; fatty acid biosynthesis. In terms of biological role, catalyzes the first and rate-limiting reaction of the four reactions that constitute the long-chain fatty acids elongation cycle. This endoplasmic reticulum-bound enzymatic process allows the addition of 2 carbons to the chain of long- and very long-chain fatty acids (VLCFAs) per cycle. Condensing enzyme with higher activity toward C18 acyl-CoAs, especially C18:3(n-3) acyl-CoAs and C18:3(n-6)-CoAs. Also active toward C20:4-, C18:0-, C18:1-, C18:2- and C16:0-CoAs, and weakly toward C20:0-CoA. Little or no activity toward C22:0-, C24:0-, or C26:0-CoAs. May participate in the production of saturated and polyunsaturated VLCFAs of different chain lengths that are involved in multiple biological processes as precursors of membrane lipids and lipid mediators. The chain is Very long chain fatty acid elongase 7 from Mus musculus (Mouse).